Reading from the N-terminus, the 334-residue chain is Fructose-1,6-bisphosphatase class 1 (334 aa).

Residues glutamate 90, aspartate 113, leucine 115, and aspartate 116 each contribute to the Mg(2+) site. Substrate is bound by residues 116–119 (DGSS), asparagine 209, tyrosine 242, and lysine 272. Residue glutamate 278 participates in Mg(2+) binding.

It belongs to the FBPase class 1 family. Homotetramer. Requires Mg(2+) as cofactor.

The protein resides in the cytoplasm. It carries out the reaction beta-D-fructose 1,6-bisphosphate + H2O = beta-D-fructose 6-phosphate + phosphate. Its pathway is carbohydrate biosynthesis; gluconeogenesis. The sequence is that of Fructose-1,6-bisphosphatase class 1 from Actinobacillus succinogenes (strain ATCC 55618 / DSM 22257 / CCUG 43843 / 130Z).